Reading from the N-terminus, the 441-residue chain is Nucleolar and spindle-associated protein 1 (441 aa).

2 disordered regions span residues 47 to 186 (ARKG…PNFK) and 216 to 267 (MNEL…LGLK). Polar residues-rich tracts occupy residues 56-74 (ESQT…ISNQ) and 100-116 (DSQQ…PTEF). Over residues 117 to 126 (QNHEKQESQD) the composition is skewed to basic and acidic residues. S124 is modified (phosphoserine; by ATM). Position 135 is a phosphoserine (S135). A compositionally biased stretch (basic and acidic residues) spans 152–171 (RDSKVPSEGKKSLYTDESSK). A Phosphothreonine modification is found at T182. Residues 237-382 (GRLSVASTPI…HKGKLKPWGQ (146 aa)) form an interaction with microtubules region. S240 is subject to Phosphoserine. The span at 241-264 (VASTPISQRRSQGRSCGPASQSTL) shows a compositional bias: polar residues. At T244 the chain carries Phosphothreonine. S247, S255, S269, S276, and S311 each carry phosphoserine. The disordered stretch occupies residues 286–319 (AATKDNEHKRSLTKTPARKSAHVTVSGGTPKGEA). Phosphothreonine occurs at positions 314, 338, and 349. Phosphoserine is present on residues S352 and S363. A KEN box motif is present at residues 384–390 (KENNYLN). Residues 401–427 (KTYKQPHLQTKEEQRKKREQERKEKKA) are disordered. A coiled-coil region spans residues 407–432 (HLQTKEEQRKKREQERKEKKAKVLGM). Positions 409–424 (QTKEEQRKKREQERKE) are enriched in basic and acidic residues. At K411 the chain carries N6-acetyllysine.

It belongs to the NUSAP family. As to quaternary structure, interacts with DNA and microtubules. Microtubule bundling is inhibited by IPO7, KPNA2 and KPNB1 while association with DNA is also inhibited by IPO7 and KPNA2. In terms of processing, ubiquitinated. Ubiquitination by FZR1 may lead to proteasome-dependent degradation of this protein. Post-translationally, phosphorylation by ATM in G2/M-phase induces mitotic arrest.

It localises to the cytoplasm. The protein resides in the nucleus. The protein localises to the nucleolus. Its subcellular location is the cytoskeleton. It is found in the spindle. It localises to the chromosome. Functionally, microtubule-associated protein with the capacity to bundle and stabilize microtubules. May associate with chromosomes and promote the organization of mitotic spindle microtubules around them. This Homo sapiens (Human) protein is Nucleolar and spindle-associated protein 1 (NUSAP1).